Reading from the N-terminus, the 338-residue chain is 1-aminocyclopropane-1-carboxylate deaminase (338 aa).

Lys51 is modified (N6-(pyridoxal phosphate)lysine). Ser78 acts as the Nucleophile in catalysis.

This sequence belongs to the ACC deaminase/D-cysteine desulfhydrase family. As to quaternary structure, homotrimer. Requires pyridoxal 5'-phosphate as cofactor.

It catalyses the reaction 1-aminocyclopropane-1-carboxylate + H2O = 2-oxobutanoate + NH4(+). In terms of biological role, catalyzes a cyclopropane ring-opening reaction, the irreversible conversion of 1-aminocyclopropane-1-carboxylate (ACC) to ammonia and alpha-ketobutyrate. Allows growth on ACC as a nitrogen source. The sequence is that of 1-aminocyclopropane-1-carboxylate deaminase from Burkholderia cenocepacia (strain ATCC BAA-245 / DSM 16553 / LMG 16656 / NCTC 13227 / J2315 / CF5610) (Burkholderia cepacia (strain J2315)).